A 132-amino-acid polypeptide reads, in one-letter code: Precursor of CEP10 (132 aa).

Residues 1–19 (MKLFIIIVVTSLTISKVFD) form the signal peptide. Residues 20-66 (KTLVTIEARNLRKMDRHEHFNANEDFVEAKMLKKIDNKNNLNNRCIN) constitute a propeptide that is removed on maturation. P70 and P73 each carry hydroxyproline. A propeptide spanning residues 82 to 91 (PKVINNKFTK) is cleaved from the precursor. P95, P98, and P102 each carry hydroxyproline. The propeptide occupies 107 to 116 (LRVVNNKFTN). Hydroxyproline is present on residues P120, P123, and P127. Residue P132 is a propeptide.

The protein belongs to the C-terminally encoded plant signaling peptide (CEP) family. In terms of assembly, interacts with CEP receptors (e.g. CEPR1 and CEPR2). In terms of processing, the mature small signaling peptide is generated by proteolytic processing of the longer precursor.

It localises to the secreted. The protein localises to the extracellular space. It is found in the apoplast. Functionally, extracellular signaling peptide that may regulate primary root growth rate and systemic nitrogen (N)-demand signaling. The protein is Precursor of CEP10 of Arabidopsis thaliana (Mouse-ear cress).